Reading from the N-terminus, the 234-residue chain is Endonuclease V (234 aa).

The Mg(2+) site is built by Asp36 and Asp104.

The protein belongs to the endonuclease V family. Requires Mg(2+) as cofactor.

The protein localises to the cytoplasm. It carries out the reaction Endonucleolytic cleavage at apurinic or apyrimidinic sites to products with a 5'-phosphate.. Functionally, DNA repair enzyme involved in the repair of deaminated bases. Selectively cleaves double-stranded DNA at the second phosphodiester bond 3' to a deoxyinosine leaving behind the intact lesion on the nicked DNA. In Yersinia pseudotuberculosis serotype O:1b (strain IP 31758), this protein is Endonuclease V.